Consider the following 265-residue polypeptide: DNA repair protein RecO (265 aa).

This sequence belongs to the RecO family.

Its function is as follows. Involved in DNA repair and RecF pathway recombination. The chain is DNA repair protein RecO from Mycolicibacterium paratuberculosis (strain ATCC BAA-968 / K-10) (Mycobacterium paratuberculosis).